Reading from the N-terminus, the 140-residue chain is Large ribosomal subunit protein uL11 (140 aa).

Belongs to the universal ribosomal protein uL11 family. In terms of assembly, part of the ribosomal stalk of the 50S ribosomal subunit. Interacts with L10 and the large rRNA to form the base of the stalk. L10 forms an elongated spine to which L12 dimers bind in a sequential fashion forming a multimeric L10(L12)X complex. Post-translationally, one or more lysine residues are methylated.

In terms of biological role, forms part of the ribosomal stalk which helps the ribosome interact with GTP-bound translation factors. The chain is Large ribosomal subunit protein uL11 from Geobacter sp. (strain M21).